The primary structure comprises 166 residues: 6,7-dimethyl-8-ribityllumazine synthase (166 aa).

Residues F24, 58–60, and 82–84 contribute to the 5-amino-6-(D-ribitylamino)uracil site; these read ALE and AVV. Residue 87–88 coordinates (2S)-2-hydroxy-3-oxobutyl phosphate; that stretch reads ET. The active-site Proton donor is H90. N115 lines the 5-amino-6-(D-ribitylamino)uracil pocket. Position 129 (R129) interacts with (2S)-2-hydroxy-3-oxobutyl phosphate.

It belongs to the DMRL synthase family.

The enzyme catalyses (2S)-2-hydroxy-3-oxobutyl phosphate + 5-amino-6-(D-ribitylamino)uracil = 6,7-dimethyl-8-(1-D-ribityl)lumazine + phosphate + 2 H2O + H(+). It functions in the pathway cofactor biosynthesis; riboflavin biosynthesis; riboflavin from 2-hydroxy-3-oxobutyl phosphate and 5-amino-6-(D-ribitylamino)uracil: step 1/2. Catalyzes the formation of 6,7-dimethyl-8-ribityllumazine by condensation of 5-amino-6-(D-ribitylamino)uracil with 3,4-dihydroxy-2-butanone 4-phosphate. This is the penultimate step in the biosynthesis of riboflavin. This Cupriavidus necator (strain ATCC 17699 / DSM 428 / KCTC 22496 / NCIMB 10442 / H16 / Stanier 337) (Ralstonia eutropha) protein is 6,7-dimethyl-8-ribityllumazine synthase.